The sequence spans 93 residues: uncharacterized protein (93 aa).

Residues 36 to 69 are a coiled coil; the sequence is SEERLLSRLFEEMDELREAVEKEDWENLRDELLD.

This is an uncharacterized protein from Archaeoglobus fulgidus (strain ATCC 49558 / DSM 4304 / JCM 9628 / NBRC 100126 / VC-16).